The chain runs to 720 residues: Calcium/calmodulin-dependent protein kinase type II (720 aa).

A Protein kinase domain is found at tyrosine 12–isoleucine 269. Residues leucine 18–valine 26 and lysine 41 each bind ATP. Residue aspartate 134 is the Proton acceptor of the active site. Threonine 284 is modified (phosphothreonine; by autocatalysis). Disordered stretches follow at residues serine 317–serine 345 and aspartate 504–alanine 586. Polar residues-rich tracts occupy residues aspartate 504–leucine 514 and proline 526–isoleucine 540. Positions serine 569–alanine 586 are enriched in low complexity.

The protein belongs to the protein kinase superfamily. CAMK Ser/Thr protein kinase family. CaMK subfamily. In terms of assembly, dodecamer. Subunits are tightly packed around a central ring-shaped scaffold with extensive contacts between the regulatory segment of one kinase and the catalytic domain of another enabling cooperative activation of a subunit by the adjacent molecule. Interacts with and phosphorylates daf-16; the interaction promotes daf-16 nuclear localization. Interacts with egl-2 and tir-1. Interacts with nsy-1. Mg(2+) serves as cofactor. As to expression, expressed in the nervous system. Observed in the ADF and AWC neurons. Position in AWC neurons is regulated by microtubules. Localized to clusters in ventral cord neurites which appear to be required for glr-1 trafficking. Also present in oocytes.

Its subcellular location is the cytoplasm. It localises to the cell projection. The protein resides in the axon. It is found in the perikaryon. The catalysed reaction is L-seryl-[protein] + ATP = O-phospho-L-seryl-[protein] + ADP + H(+). The enzyme catalyses L-threonyl-[protein] + ATP = O-phospho-L-threonyl-[protein] + ADP + H(+). Ca2(+)/calmodulin binding removes an autoinhibitory regulatory segment located C-terminal to the kinase domain. This releases the catalytic activity of the enzyme and makes accessible a regulatory residue Thr-284. Phosphorylation of Thr-284 by another kinase domain within the oligomeric holoenzyme keeps CaMKII active in the absence of Ca(2+)/calmodulin by preventing the rebinding of the regulatory segment to the kinase domain and by increasing the affinity of calmodulin for the enzyme. Can respond to high-frequency Ca(2+) pulses to become Ca(2+) independent. In terms of biological role, acts in the signaling of a variety of pathways and processes. Phosphorylates 'Ser-319' of daf-16 in response to stress signals, such as heat, starvation and oxidation, which plays a role in prolonging lifespan. Required for viability under chronic osmotic stress in which it acts downstream of osr-1. Has roles in locomotion, oocyte maturation, brood size, egg laying, defecation, meiotic maturation and neuronal cell fate specification. Required for the regulation of synaptic density and neuromuscular junction morphology. Regulates the synaptic trafficking of glr-1. Bidirectional modulator of neurotransmitter release with negative modulatory effects mainly mediated via slo-1 activation. Involved in activation of ADF neurons and increased tph-1 transcription following exposure to pathogenic bacteria which leads to learned olfactory aversion to the bacteria. Implicated in the muscle regulation of spicule protraction. In conjunction with egl-2 has a role in the suppression of mating behavior under food deprivation to encourage foraging. Involved in restricting str-2 expression to only one of the two AWC neurons. May suppress the functional response to an internal pacemaker, perhaps by modulating the activity of the IP3 receptor. The sequence is that of Calcium/calmodulin-dependent protein kinase type II (unc-43) from Caenorhabditis elegans.